The primary structure comprises 1217 residues: ATP-dependent helicase/nuclease subunit A (1217 aa).

In terms of domain architecture, UvrD-like helicase ATP-binding spans 10 to 475 (VIWTDAQWQS…IDLSQNFRSR (466 aa)). 31–38 (AAAGSGKT) contributes to the ATP binding site. One can recognise a UvrD-like helicase C-terminal domain in the interval 476-786 (KEVLSTTNYI…RMMTIHSSKG (311 aa)).

Belongs to the helicase family. AddA subfamily. In terms of assembly, heterodimer of AddA and AddB/RexB. Mg(2+) serves as cofactor.

It catalyses the reaction Couples ATP hydrolysis with the unwinding of duplex DNA by translocating in the 3'-5' direction.. The enzyme catalyses ATP + H2O = ADP + phosphate + H(+). Functionally, the heterodimer acts as both an ATP-dependent DNA helicase and an ATP-dependent, dual-direction single-stranded exonuclease. Recognizes the chi site generating a DNA molecule suitable for the initiation of homologous recombination. The AddA nuclease domain is required for chi fragment generation; this subunit has the helicase and 3' -&gt; 5' nuclease activities. This is ATP-dependent helicase/nuclease subunit A from Staphylococcus aureus (strain NCTC 8325 / PS 47).